Consider the following 292-residue polypeptide: DSC E3 ubiquitin ligase complex subunit 3 (292 aa).

At 1 to 243 the chain is on the extracellular side; that stretch reads MSAEPLLPTH…PIANIKHNKD (243 aa). N-linked (GlcNAc...) asparagine glycans are attached at residues Asn11, Asn41, Asn77, Asn99, and Asn145. Residues 244-264 traverse the membrane as a helical segment; it reads LLLGICVGFFFGVFGILLMKF. The Cytoplasmic portion of the chain corresponds to 265-273; sequence DGLFNRRQK. Residues 274–291 form a helical membrane-spanning segment; sequence MAIFAGVIVNVMFCLVRG. Residue Phe292 is a topological domain, extracellular.

It belongs to the dsc3 family. Component of the DSC E3 ligase complexes composed of at least TUL1, DSC2, DSC3, UBX3, CDC48 as well as VLD1 for the vacuole-localized complex or GLD1 for the Golgi/endosome-localized complex.

The protein localises to the endoplasmic reticulum membrane. Its function is as follows. Component of the DSC E3 ubiquitin ligase complexes that tag proteins present in Golgi, endosome and vacuole membranes and function in protein homeostasis under non-stress conditions and support a role in protein quality control. Involved in endocytic protein trafficking. This is DSC E3 ubiquitin ligase complex subunit 3 from Saccharomyces cerevisiae (strain ATCC 204508 / S288c) (Baker's yeast).